Here is a 173-residue protein sequence, read N- to C-terminus: Mesencephalic astrocyte-derived neurotrophic factor homolog (173 aa).

The signal sequence occupies residues 1 to 22; it reads MKTWHMVVVIGFLATLAQTSLA. Cystine bridges form between cysteine 28-cysteine 114, cysteine 31-cysteine 103, cysteine 61-cysteine 72, and cysteine 148-cysteine 151.

The protein belongs to the ARMET family.

The protein resides in the secreted. Functionally, required during the maturation of the embryonic nervous system for maintenance of neuronal and cuticular connectivity. Essential for maintenance of dopaminergic neurons and dopamine levels. This chain is Mesencephalic astrocyte-derived neurotrophic factor homolog, found in Drosophila sechellia (Fruit fly).